Consider the following 702-residue polypeptide: MEIRGLITRLLGPCHLRHLILCSLGLYSILVQSVHCRHHDIGSSVAHQLGSKYSQSSSLSSSSQSSSSLAEEATLNKDSDAFFTPYIGHGDSVRIVDAELGTLEREHIHSTTTRRRGLTRRESSSDATDSDPLVITTDKGKIRGTTLEAPSGKKVDAWMGIPYAQPPLGPLRFRHPRPAERWTGVLNATKPPNSCVQIVDTVFGDFPGATMWNPNTPLSEDCLYINVVVPRPRPKNAAVMLWIFGGGFYSGTATLDVYDHRTLASEENVIVVSLQYRVASLGFLFLGTPEAPGNAGLFDQNLALRWVRDNIHRFGGDPSRVTLFGESAGAVSVSLHLLSALSRDLFQRAILQSGSPTAPWALVSREEATLRALRLAEAVNCPHDATKLSDAVECLRTKDPNELVDNEWGTLGICEFPFVPVVDGAFLDETPQRSLASGRFKKTDILTGSNTEEGYYFIIYYLTELLRKEEGVTVTREEFLQAVRELNPYVNGAARQAIVFEYTDWIEPDNPNSNRDALDKMVGDYHFTCNVNEFAQRYAEEGNNVFMYLYTHRSKGNPWPRWTGVMHGDEINYVFGEPLNSALGYQDDEKDFSRKIMRYWSNFAKTGNPNPSTPSVDLPEWPKHTAHGRHYLELGLNTTFVGRGPRLRQCAFWKKYLPQLVAATSNLQVTPAPSVPCESSSTSYRSTLLLIVTLLLVTRFKI.

The N-terminal stretch at Met-1–Cys-36 is a signal peptide. The interval His-107–Val-134 is disordered. A glycan (N-linked (GlcNAc...) asparagine) is linked at Asn-187. Cysteines 195 and 222 form a disulfide. Ser-327 serves as the catalytic Acyl-ester intermediate. A disulfide bridge connects residues Cys-381 and Cys-394. Residues Glu-453 and His-567 each act as charge relay system in the active site. Residues Cys-529 and Cys-650 are joined by a disulfide bond. An N-linked (GlcNAc...) asparagine glycan is attached at Asn-637.

It belongs to the type-B carboxylesterase/lipase family.

The protein localises to the synapse. It is found in the secreted. It localises to the cell membrane. It carries out the reaction acetylcholine + H2O = choline + acetate + H(+). Rapidly hydrolyzes choline released into the synapse. The sequence is that of Acetylcholinesterase (ACHE1) from Culex pipiens (House mosquito).